The primary structure comprises 306 residues: Mitochondrial uncoupling protein 1 (306 aa).

Solcar repeat units lie at residues 9–102, 112–203, and 212–296; these read LSLP…VKNL, VPLS…VKET, and DNVV…AKKY. 6 helical membrane passes run 15–35, 71–91, 118–138, 177–197, 218–238, and 269–289; these read FACSAFAACVGEVCTIPLDTA, LRSLWKGVVPGLHRQCLFGGL, ILAGLTTGALGIMVANPTDLV, TGLGPNVARNAIINAAELASY, ILSGLGAGFFAVCIGSPVDVV, and YKGFIPNFGRLGSWNVIMFLT.

Belongs to the mitochondrial carrier (TC 2.A.29) family. In terms of tissue distribution, widely expressed.

It is found in the mitochondrion inner membrane. Its function is as follows. PUMPS are mitochondrial transporter proteins that create proton leaks across the inner mitochondrial membrane, thus uncoupling oxidative phosphorylation. This leads to a decrease in the efficiency of oxidative phosphorylation and an increase in heat production. Is involved in protecting plant cells against oxidative stress damage and maintaining the redox balance of the mitochondrial electron transport chain to facilitate photosynthetic metabolism. May play a regulatory role during photorespiration. The polypeptide is Mitochondrial uncoupling protein 1 (PUMP1) (Arabidopsis thaliana (Mouse-ear cress)).